Consider the following 268-residue polypeptide: Shikimate dehydrogenase (NADP(+)) (268 aa).

Shikimate is bound at residue Thr-62. Lys-66 functions as the Proton acceptor in the catalytic mechanism. Residue Glu-78 coordinates NADP(+). Positions 87 and 102 each coordinate shikimate. NADP(+)-binding positions include 126-130 (GSGGI) and Leu-207. Tyr-209 provides a ligand contact to shikimate. NADP(+) is bound at residue Gly-230.

Belongs to the shikimate dehydrogenase family. As to quaternary structure, homodimer.

The catalysed reaction is shikimate + NADP(+) = 3-dehydroshikimate + NADPH + H(+). Its pathway is metabolic intermediate biosynthesis; chorismate biosynthesis; chorismate from D-erythrose 4-phosphate and phosphoenolpyruvate: step 4/7. Its function is as follows. Involved in the biosynthesis of the chorismate, which leads to the biosynthesis of aromatic amino acids. Catalyzes the reversible NADPH linked reduction of 3-dehydroshikimate (DHSA) to yield shikimate (SA). This Thermoplasma acidophilum (strain ATCC 25905 / DSM 1728 / JCM 9062 / NBRC 15155 / AMRC-C165) protein is Shikimate dehydrogenase (NADP(+)).